Consider the following 484-residue polypeptide: Ribosomal protein uS12 methylthiotransferase RimO (484 aa).

The MTTase N-terminal domain occupies 8-119 (RRVAMVTLGC…LAERLDDVLA (112 aa)). The [4Fe-4S] cluster site is built by cysteine 17, cysteine 53, cysteine 82, cysteine 184, cysteine 188, and cysteine 191. Positions 170–401 (LDDSPLAALK…ALADELVAQR (232 aa)) constitute a Radical SAM core domain. Residues 403-469 (EDRVGTEVRV…GVDLVVRPVG (67 aa)) form the TRAM domain.

It belongs to the methylthiotransferase family. RimO subfamily. [4Fe-4S] cluster is required as a cofactor.

Its subcellular location is the cytoplasm. It carries out the reaction L-aspartate(89)-[ribosomal protein uS12]-hydrogen + (sulfur carrier)-SH + AH2 + 2 S-adenosyl-L-methionine = 3-methylsulfanyl-L-aspartate(89)-[ribosomal protein uS12]-hydrogen + (sulfur carrier)-H + 5'-deoxyadenosine + L-methionine + A + S-adenosyl-L-homocysteine + 2 H(+). In terms of biological role, catalyzes the methylthiolation of an aspartic acid residue of ribosomal protein uS12. In Saccharopolyspora erythraea (strain ATCC 11635 / DSM 40517 / JCM 4748 / NBRC 13426 / NCIMB 8594 / NRRL 2338), this protein is Ribosomal protein uS12 methylthiotransferase RimO.